A 332-amino-acid polypeptide reads, in one-letter code: Phosphoribulokinase (332 aa).

The protein belongs to the phosphoribulokinase family.

The catalysed reaction is D-ribulose 5-phosphate + ATP = D-ribulose 1,5-bisphosphate + ADP + H(+). Its pathway is carbohydrate biosynthesis; Calvin cycle. The sequence is that of Phosphoribulokinase (prk) from Synechocystis sp. (strain ATCC 27184 / PCC 6803 / Kazusa).